A 117-amino-acid polypeptide reads, in one-letter code: Ig kappa chain V region 12F2 (117 aa).

An N-terminal signal peptide occupies residues Leu-1–Cys-6. Positions Ala-7 to Cys-29 are framework-1. An intrachain disulfide couples Cys-29 to Cys-86. The complementarity-determining-1 stretch occupies residues Gln-30 to Ser-40. The segment at Trp-41–Tyr-55 is framework-2. Positions Arg-56 to Ser-62 are complementarity-determining-2. The tract at residues Gly-63–Cys-94 is framework-3. The complementarity-determining-3 stretch occupies residues Gln-95 to Val-106. The segment at Phe-107–Lys-116 is framework-4.

The chain is Ig kappa chain V region 12F2 from Oryctolagus cuniculus (Rabbit).